A 310-amino-acid chain; its full sequence is Methionyl-tRNA formyltransferase (310 aa).

S109–P112 contributes to the (6S)-5,6,7,8-tetrahydrofolate binding site.

The protein belongs to the Fmt family.

It carries out the reaction L-methionyl-tRNA(fMet) + (6R)-10-formyltetrahydrofolate = N-formyl-L-methionyl-tRNA(fMet) + (6S)-5,6,7,8-tetrahydrofolate + H(+). In terms of biological role, attaches a formyl group to the free amino group of methionyl-tRNA(fMet). The formyl group appears to play a dual role in the initiator identity of N-formylmethionyl-tRNA by promoting its recognition by IF2 and preventing the misappropriation of this tRNA by the elongation apparatus. This Pseudomonas entomophila (strain L48) protein is Methionyl-tRNA formyltransferase.